We begin with the raw amino-acid sequence, 595 residues long: MNDLIKHKLELLPNNPGCYLHKDKFGNIIYVGKAKNLKNRVRSYFRGSHDTKTELLVSEIADFEFIVTESNIEALLLEINLIQENMPKFNIRLKDGKSYPFIKITKELYPRLLITRQVKKDGGLYFGPYPDAGAANEIKKLLDRIFPFKKCKNPANKVCFYYHIGQCKAHTICHTTEAYWQGLVEDVKNFLNGHDDKIVNQLKAKMKDMSDQMEFERAAEYRDLIEAVSTLRTKQRVIRQDMQDRDIFGYYVDKGWMCVQVFFVRQGKLIQRDVNMFPYYNDAEEDFLTYIGQFYLDSRHLKPKEIFIPGDIDQESVEALVGNEVKVFKPQRGEKKQLVNLAMKNARVSLTQKFDLLEKDIAKTQGAIENLGKLMGIPTPVRIESFDNSNIMGTSPVSAMVVFENGKPNKKEYRKYKIKTVEGPDDYASMREVIRRRYSRVKRDGLTPPDLIIMDGGQGQVNVAKDVLRNELNLSIPVAGLQKNDKHQTNELLFGDPLRVIDLPRQSEEFFLLHRIQDEVHRFAITFHRQVRSKNSFSSKLDGVEGLGPKRKQKLLKNFKSMTAIQQASVEDIQALGIPEKVAQALLDKLSQDSH.

A GIY-YIG domain is found at 14–91 (NNPGCYLHKD…IQENMPKFNI (78 aa)). Residues 196–231 (DKIVNQLKAKMKDMSDQMEFERAAEYRDLIEAVSTL) form the UVR domain.

Belongs to the UvrC family. In terms of assembly, interacts with UvrB in an incision complex.

It localises to the cytoplasm. Functionally, the UvrABC repair system catalyzes the recognition and processing of DNA lesions. UvrC both incises the 5' and 3' sides of the lesion. The N-terminal half is responsible for the 3' incision and the C-terminal half is responsible for the 5' incision. The protein is UvrABC system protein C of Streptococcus thermophilus (strain ATCC BAA-250 / LMG 18311).